Consider the following 1107-residue polypeptide: Voltage-gated delayed rectifier potassium channel KCNH8 (1107 aa).

Residues 1–225 lie on the Cytoplasmic side of the membrane; that stretch reads MPVMKGLLAP…HFSTFKAGWD (225 aa). The 73-residue stretch at 18–90 folds into the PAS domain; sequence IATRFDGTHS…LQIEKSLEEK (73 aa). Positions 93–145 constitute a PAC domain; it reads FKGEIMFYKKNGSPFWCLLDIVPIKNEKGDVVLFLASFKDITDTKVKITPEDK. A helical membrane pass occupies residues 226-246; that stretch reads WLILLATFYVAVTVPYNVCFI. Topologically, residues 247 to 255 are extracellular; sequence GNDDLSTTR. A helical membrane pass occupies residues 256–276; that stretch reads STTVSDIAVEILFIIDIILNF. At 277-298 the chain is on the cytoplasmic side; the sequence is RTTYVSKSGQVIFEARSICIHY. Residues 299-319 traverse the membrane as a helical segment; it reads VTTWFIIDLIAALPFDLLYAF. Asn320 carries an N-linked (GlcNAc...) asparagine glycan. Over 320 to 327 the chain is Extracellular; it reads NVTVVSLV. A helical; Voltage-sensor transmembrane segment spans residues 328-348; it reads HLLKTVRLLRLLRLLQKLDRY. The Cytoplasmic segment spans residues 349 to 357; sequence SQHSTIVLT. The helical transmembrane segment at 358-378 threads the bilayer; it reads LLMSMFALLAHWMACIWYVIG. The Extracellular segment spans residues 379 to 419; sequence KMEREDNSLLKWEVGWLHELGKRLESPYYGNNTLGGPSIRS. N-linked (GlcNAc...) asparagine glycosylation occurs at Asn409. Residues 420-440 constitute an intramembrane region (pore-forming); sequence AYIAALYFTLSSLTSVGFGNV. A Selectivity filter motif is present at residues 434 to 439; that stretch reads SVGFGN. At 441-448 the chain is on the extracellular side; the sequence is SANTDAEK. Residues 449–469 form a helical membrane-spanning segment; it reads IFSICTMLIGALMHALVFGNV. The Cytoplasmic portion of the chain corresponds to 470–1107; sequence TAIIQRMYSR…EVKDNKAINV (638 aa). Positions 551-668 are cNMP-binding domain; that stretch reads LFECASRGCL…HKFVEDIQHD (118 aa). Positions 686–702 are enriched in polar residues; that stretch reads SNKSMVSQSEPKGNGNI. Disordered stretches follow at residues 686–742, 764–791, 818–847, and 961–989; these read SNKS…NKKV, HSPI…KRKE, EDGN…PPLG, and VDPS…YHSP. Positions 710–724 are enriched in acidic residues; sequence VEDEEEEEEGEEEEA. Positions 961-972 are enriched in polar residues; it reads VDPSSVGSSPQR.

Belongs to the potassium channel family. H (Eag) (TC 1.A.1.20) subfamily. Kv12.1/KCNH8 sub-subfamily. The potassium channel is probably composed of a homo- or heterotetrameric complex of pore-forming alpha subunits that can associate with modulating beta subunits. Primarily expressed in the nervous system.

The protein resides in the membrane. The catalysed reaction is K(+)(in) = K(+)(out). In terms of biological role, pore-forming (alpha) subunit of a voltage-gated delayed rectifier potassium channel that mediates outward-rectifying potassium currents. Elicits a slowly activating, non-inactivating and slowly deactivation outwards potassium current at depolarizating voltages from -30 mV to +50mV. Shows no obvious change in the activation rate from different holding potentials. Activation is strongly dependent on the pH of the external solution. In Homo sapiens (Human), this protein is Voltage-gated delayed rectifier potassium channel KCNH8.